A 404-amino-acid chain; its full sequence is Glucose-1-phosphate adenylyltransferase (404 aa).

Residues Tyr99, Gly164, 179-180, and Ser197 contribute to the alpha-D-glucose 1-phosphate site; that span reads EK.

This sequence belongs to the bacterial/plant glucose-1-phosphate adenylyltransferase family.

The catalysed reaction is alpha-D-glucose 1-phosphate + ATP + H(+) = ADP-alpha-D-glucose + diphosphate. The protein operates within capsule biogenesis; capsule polysaccharide biosynthesis. It functions in the pathway glycan biosynthesis; glycogen biosynthesis. Functionally, involved in the biosynthesis of ADP-glucose, a building block, required in the biosynthesis of maltose-1-phosphate (M1P) and in the elongation reactions to produce linear alpha-1,4-glucans. Catalyzes the reaction between ATP and alpha-D-glucose 1-phosphate (G1P) to produce pyrophosphate and ADP-Glc. The polypeptide is Glucose-1-phosphate adenylyltransferase (Mycolicibacterium paratuberculosis (strain ATCC BAA-968 / K-10) (Mycobacterium paratuberculosis)).